Consider the following 634-residue polypeptide: Sodium-dependent multivitamin transporter (634 aa).

The next 12 membrane-spanning stretches (helical) occupy residues 23–43, 65–85, 100–120, 142–162, 175–195, 207–227, 255–275, 295–315, 350–370, 403–423, 427–447, and 455–475; these read FSVV…VIGL, MGCL…VAIL, FLGC…IPVF, ICGT…ALYA, LWLS…LGGL, LIMF…VGGL, FWTL…VNQA, AVFP…LVMF, LPGL…SSAF, FAYG…GSVL, LSIF…GMFF, and AIVG…GSIV. Residues asparagine 488 and asparagine 497 are each glycosylated (N-linked (GlcNAc...) asparagine). A helical transmembrane segment spans residues 526 to 546; sequence LWYSAHNSTTVIAVGLIVSLL.

Belongs to the sodium:solute symporter (SSF) (TC 2.A.21) family. In terms of assembly, interacts with PDZD11. In terms of tissue distribution, expressed in the jejunum (at protein level). Expressed in lung, skeletal muscle, heart, brain, kidney, intestine, liver, and placenta.

Its subcellular location is the cell membrane. It localises to the apical cell membrane. The enzyme catalyses biotin(out) + 2 Na(+)(out) = biotin(in) + 2 Na(+)(in). The catalysed reaction is (R)-pantothenate(out) + 2 Na(+)(out) = (R)-pantothenate(in) + 2 Na(+)(in). It carries out the reaction (R)-lipoate(out) + 2 Na(+)(out) = (R)-lipoate(in) + 2 Na(+)(in). It catalyses the reaction iodide(out) + 2 Na(+)(out) = iodide(in) + 2 Na(+)(in). In terms of biological role, sodium-dependent multivitamin transporter that mediates the electrogenic transport of pantothenate, biotin, lipoate and iodide. Functions as a Na(+)-coupled substrate symporter where the stoichiometry of Na(+):substrate is 2:1, creating an electrochemical Na(+) gradient used as driving force for substrate uptake. Required for biotin and pantothenate uptake in the intestine across the brush border membrane. Plays a role in the maintenance of intestinal mucosa integrity, by providing the gut mucosa with biotin. Contributes to the luminal uptake of biotin and pantothenate into the brain across the blood-brain barrier. The polypeptide is Sodium-dependent multivitamin transporter (Rattus norvegicus (Rat)).